Reading from the N-terminus, the 214-residue chain is RNA-binding protein 38 (214 aa).

Residues Thr11–Leu88 form the RRM domain.

It belongs to the RBM38 family. Strongly expressed in the nervous system. Expressed at early neurula stages of development.

It localises to the cytoplasm. The protein resides in the cytosol. It is found in the nucleus. Functionally, RNA-binding protein that specifically bind the 3'-UTR of VegT transcripts, leading to maintain their stability and stimulate their translation, thereby playing a role in germ layer formation. VegT is a localized maternal determinant essentially required for endoderm formation. Also has some proneural function in the open neural plate and in the context of retinogenesis. May also act as a mRNA splicing factor. May play a role in myogenic differentiation. The sequence is that of RNA-binding protein 38 (rbm38) from Xenopus laevis (African clawed frog).